A 330-amino-acid polypeptide reads, in one-letter code: ADP-L-glycero-D-manno-heptose-6-epimerase (330 aa).

NADP(+) is bound by residues 10–11 (FI), 31–32 (DD), lysine 38, lysine 53, 74–78 (QGACS), and asparagine 91. The active-site Proton acceptor is tyrosine 138. Residue lysine 142 coordinates NADP(+). Asparagine 167 lines the substrate pocket. Positions 168 and 176 each coordinate NADP(+). Lysine 176 acts as the Proton acceptor in catalysis. Substrate contacts are provided by residues arginine 178, histidine 185, 199–202 (FAGW), arginine 212, and tyrosine 291.

The protein belongs to the NAD(P)-dependent epimerase/dehydratase family. HldD subfamily. Homopentamer. NADP(+) serves as cofactor.

The enzyme catalyses ADP-D-glycero-beta-D-manno-heptose = ADP-L-glycero-beta-D-manno-heptose. It functions in the pathway nucleotide-sugar biosynthesis; ADP-L-glycero-beta-D-manno-heptose biosynthesis; ADP-L-glycero-beta-D-manno-heptose from D-glycero-beta-D-manno-heptose 7-phosphate: step 4/4. In terms of biological role, catalyzes the interconversion between ADP-D-glycero-beta-D-manno-heptose and ADP-L-glycero-beta-D-manno-heptose via an epimerization at carbon 6 of the heptose. This Bordetella petrii (strain ATCC BAA-461 / DSM 12804 / CCUG 43448) protein is ADP-L-glycero-D-manno-heptose-6-epimerase.